The primary structure comprises 339 residues: Annexin A2 (339 aa).

The residue at position 2 (S2) is an N-acetylserine. Residues 2 to 24 (STVHEILCKLSLEGDHSTPPSAY) are S100A10-binding site. Y24 bears the Phosphotyrosine; by SRC mark. S26 carries the post-translational modification Phosphoserine; by PKC. Annexin repeat units lie at residues 33–104 (FDAE…GLLK) and 105–176 (TPAQ…ALAK). N6-acetyllysine; alternate is present on K49. Residue K49 forms a Glycyl lysine isopeptide (Lys-Gly) (interchain with G-Cter in SUMO1); alternate linkage. K49 participates in a covalent cross-link: Glycyl lysine isopeptide (Lys-Gly) (interchain with G-Cter in SUMO2); alternate. The residue at position 152 (K152) is an N6-acetyllysine. At S184 the chain carries Phosphoserine. Annexin repeat units follow at residues 189 to 261 (ELID…NLVQ) and 265 to 336 (NKPL…YLCG). Y199 is modified (phosphotyrosine). K227 is subject to N6-acetyllysine.

This sequence belongs to the annexin family. Heterotetramer containing 2 light chains of S100A10/p11 and 2 heavy chains of ANXA2/p36. Interacts with ATP1B1. Interacts with DYSF. Interacts with COCH. Interacts (via repeat Annexin 1) with PCSK9 (via the C-terminal domain); the interaction inhibits the degradation of LDLR. Interacts with CEACAM1 (via the cytoplasmic domain); this interaction is regulated by phosphorylation of CEACAM1. Interacts with APPL2 and APPL1; targets APPL2 to endosomes and acting in parallel to RAB5A. Interacts with S100A4. May interact with UBAP2. In terms of processing, ISGylated. As to expression, expressed strongly in velvet antler reserve mesenchyme.

The protein localises to the secreted. It localises to the extracellular space. Its subcellular location is the extracellular matrix. It is found in the basement membrane. Calcium-regulated membrane-binding protein whose affinity for calcium is greatly enhanced by anionic phospholipids. It binds two calcium ions with high affinity. May be involved in heat-stress response. Inhibits PCSK9-enhanced LDLR degradation, probably reduces PCSK9 protein levels via a translational mechanism but also competes with LDLR for binding with PCSK9. Binds to endosomes damaged by phagocytosis of particulate wear debris and participates in endosomal membrane stabilization, thereby limiting NLRP3 inflammasome activation. Required for endothelial cell surface plasmin generation and may support fibrinolytic surveillance and neoangiogenesis. This Cervus elaphus (Red deer) protein is Annexin A2 (ANXA2).